The primary structure comprises 451 residues: MSIQSGEILETVKMVADQNFDVRTITIGIDLHDCISTDIDVLNQNIYNKITTVGKDLVATAKHLSAKYGVPIVNQRISVTPIAQIAAATKADSYVSVAQTLDKAAKAIGVSFIGGFSALVQKGMSPSDEVLIRSVPEAMKTTDIVCSSINIGSTRAGINMDAVKLAGETIKRTAEITPEGFGCAKIVVFCNAVEDNPFMAGAFHGSGEADAVINVGVSGPGVVKAALENSDAVSLTEVAEVVKKTAFKITRVGELIGREASKMLNIPFGILDLSLAPTPAVGDSVARILEEMGLSVCGTHGTTAALALLNDAVKKGGMMASSAVGGLSGAFIPVSEDEGMIAAAEAGVLTLDKLEAMTAVCSVGLDMIAVPGDTPAHTISGIIADEAAIGMINSKTTAVRIIPVTGKTVGDSVEFGGLLGYAPVMPAKEGSCEVFVNRGGRIPAPVQSMKN.

This sequence belongs to the UPF0210 family. Homodimer.

The polypeptide is UPF0210 protein NGO_1297 (Neisseria gonorrhoeae (strain ATCC 700825 / FA 1090)).